Consider the following 284-residue polypeptide: MKKVLIVLSIEKPNAKKICKEIEAFLSAKGIDSFVYKYDGISHSPELNEDYDLAISLGGDGTVLFTARYSAPRHIPVFPINLGRFGFIANIEPKEWEGELLHLLNGKQALHKRMLLSASINRKNKEIVKYEALNDAVVSGSGIAKLINLDISFNGISFGVFRADGVIVSTPTGSTAYSAASGGPILDPDVSAFVLTPISPFSLSNRPLVLPSSGQMKIKILPARAKDIIVSIDGQEMVSLQEDDEIIISESPNKVKMAGCSPDNFYKALRSKLGWSGSSSPKLN.

Catalysis depends on aspartate 60, which acts as the Proton acceptor. NAD(+)-binding positions include 60–61, 134–135, lysine 145, arginine 162, aspartate 164, and glutamine 235; these read DG and ND.

The protein belongs to the NAD kinase family. Requires a divalent metal cation as cofactor.

The protein localises to the cytoplasm. The catalysed reaction is NAD(+) + ATP = ADP + NADP(+) + H(+). In terms of biological role, involved in the regulation of the intracellular balance of NAD and NADP, and is a key enzyme in the biosynthesis of NADP. Catalyzes specifically the phosphorylation on 2'-hydroxyl of the adenosine moiety of NAD to yield NADP. This is NAD kinase from Treponema denticola (strain ATCC 35405 / DSM 14222 / CIP 103919 / JCM 8153 / KCTC 15104).